The primary structure comprises 130 residues: Small ribosomal subunit protein uS9 (130 aa).

It belongs to the universal ribosomal protein uS9 family.

This chain is Small ribosomal subunit protein uS9, found in Mycoplasmoides gallisepticum (strain R(low / passage 15 / clone 2)) (Mycoplasma gallisepticum).